Consider the following 87-residue polypeptide: Cell division topological specificity factor (87 aa).

It belongs to the MinE family.

Its function is as follows. Prevents the cell division inhibition by proteins MinC and MinD at internal division sites while permitting inhibition at polar sites. This ensures cell division at the proper site by restricting the formation of a division septum at the midpoint of the long axis of the cell. The protein is Cell division topological specificity factor of Vibrio vulnificus (strain CMCP6).